The following is a 290-amino-acid chain: tRNA(Ile)-lysidine synthase, chloroplastic (290 aa).

33–38 contacts ATP; it reads SGGQDS.

The protein belongs to the tRNA(Ile)-lysidine synthase family.

It is found in the plastid. It localises to the chloroplast. The enzyme catalyses cytidine(34) in tRNA(Ile2) + L-lysine + ATP = lysidine(34) in tRNA(Ile2) + AMP + diphosphate + H(+). In terms of biological role, ligates lysine onto the cytidine present at position 34 of the AUA codon-specific tRNA(Ile) that contains the anticodon CAU, in an ATP-dependent manner. Cytidine is converted to lysidine, thus changing the amino acid specificity of the tRNA from methionine to isoleucine. In Cyanidioschyzon merolae (strain NIES-3377 / 10D) (Unicellular red alga), this protein is tRNA(Ile)-lysidine synthase, chloroplastic.